The following is a 215-amino-acid chain: 3-demethoxyubiquinol 3-hydroxylase (215 aa).

Positions 64, 94, 97, 146, 178, and 181 each coordinate Fe cation.

It belongs to the COQ7 family. Fe cation is required as a cofactor.

Its subcellular location is the cell membrane. It carries out the reaction a 5-methoxy-2-methyl-3-(all-trans-polyprenyl)benzene-1,4-diol + AH2 + O2 = a 3-demethylubiquinol + A + H2O. The protein operates within cofactor biosynthesis; ubiquinone biosynthesis. Catalyzes the hydroxylation of 2-nonaprenyl-3-methyl-6-methoxy-1,4-benzoquinol during ubiquinone biosynthesis. In Pseudomonas aeruginosa (strain LESB58), this protein is 3-demethoxyubiquinol 3-hydroxylase.